The sequence spans 468 residues: UDP-N-acetylmuramate--L-alanine ligase (468 aa).

112–118 (GTHGKTT) serves as a coordination point for ATP.

Belongs to the MurCDEF family.

The protein localises to the cytoplasm. The enzyme catalyses UDP-N-acetyl-alpha-D-muramate + L-alanine + ATP = UDP-N-acetyl-alpha-D-muramoyl-L-alanine + ADP + phosphate + H(+). It functions in the pathway cell wall biogenesis; peptidoglycan biosynthesis. Functionally, cell wall formation. The sequence is that of UDP-N-acetylmuramate--L-alanine ligase from Bordetella petrii (strain ATCC BAA-461 / DSM 12804 / CCUG 43448).